The chain runs to 78 residues: ATP synthase subunit c (78 aa).

The next 2 membrane-spanning stretches (helical) occupy residues 16 to 36 and 57 to 77; these read LATL…ASFL and MALA…ILFV.

It belongs to the ATPase C chain family. F-type ATPases have 2 components, F(1) - the catalytic core - and F(0) - the membrane proton channel. F(1) has five subunits: alpha(3), beta(3), gamma(1), delta(1), epsilon(1). F(0) has three main subunits: a(1), b(2) and c(10-14). The alpha and beta chains form an alternating ring which encloses part of the gamma chain. F(1) is attached to F(0) by a central stalk formed by the gamma and epsilon chains, while a peripheral stalk is formed by the delta and b chains.

The protein resides in the cell inner membrane. In terms of biological role, f(1)F(0) ATP synthase produces ATP from ADP in the presence of a proton or sodium gradient. F-type ATPases consist of two structural domains, F(1) containing the extramembraneous catalytic core and F(0) containing the membrane proton channel, linked together by a central stalk and a peripheral stalk. During catalysis, ATP synthesis in the catalytic domain of F(1) is coupled via a rotary mechanism of the central stalk subunits to proton translocation. Its function is as follows. Key component of the F(0) channel; it plays a direct role in translocation across the membrane. A homomeric c-ring of between 10-14 subunits forms the central stalk rotor element with the F(1) delta and epsilon subunits. The chain is ATP synthase subunit c from Hyphomonas neptunium (strain ATCC 15444).